We begin with the raw amino-acid sequence, 33 residues long: MGKQIFNTAVICFTLTLIGLSLGFVLLKIQGDE.

A helical transmembrane segment spans residues 9 to 29 (AVICFTLTLIGLSLGFVLLKI).

The protein belongs to the PetM family. The 4 large subunits of the cytochrome b6-f complex are cytochrome b6, subunit IV (17 kDa polypeptide, PetD), cytochrome f and the Rieske protein, while the 4 small subunits are PetG, PetL, PetM and PetN. The complex functions as a dimer.

It localises to the plastid. The protein localises to the cyanelle thylakoid membrane. Its function is as follows. Component of the cytochrome b6-f complex, which mediates electron transfer between photosystem II (PSII) and photosystem I (PSI), cyclic electron flow around PSI, and state transitions. The polypeptide is Cytochrome b6-f complex subunit 7 (Cyanophora paradoxa).